Reading from the N-terminus, the 436-residue chain is DNA-dependent metalloprotease SPRTN (436 aa).

In terms of domain architecture, SprT-like spans 19–186 (IRALFLEFND…RTCGGEFVKI (168 aa)). A Zn(2+)-binding site is contributed by His85. Residue Glu86 is part of the active site. The Zn(2+) site is built by His89 and His104. Residues 184–219 (VKIKEPENYSQKRKRNNDPTKSELGNSSHVKINKGK) form a disordered region. Residues 231–239 (FSGTGYKLF) carry the SHP-box motif. The PIP-box motif lies at 271-277 (QTDSTFL). Positions 300 to 321 (GSPIKLPSSSNNKSHQDSSKQK) are disordered. The UBZ4-type zinc-finger motif lies at 408 to 435 (KVCCPVCGTEIFESKINDHLDTCLQNYN). The Zn(2+) site is built by Cys411, Cys414, His426, and Cys430.

Belongs to the Spartan family. In terms of assembly, homodimer. Zn(2+) serves as cofactor. In terms of processing, autocatalytically cleaved in response to double-stranded DNA-binding: autocatalytic cleavage takes place in trans and leads to inactivation.

Its subcellular location is the nucleus. It is found in the chromosome. With respect to regulation, DNA-binding activates the protease activity: single-stranded DNA-binding specifically activates ability to cleave covalent DNA-protein cross-links (DPCs). In contrast, double-stranded DNA-binding specifically activates autocatalytic cleavage, and subsequent inactivation. DNA-dependent metalloendopeptidase that mediates the proteolytic cleavage of covalent DNA-protein cross-links (DPCs) during DNA synthesis, thereby playing a key role in maintaining genomic integrity. DPCs are highly toxic DNA lesions that interfere with essential chromatin transactions, such as replication and transcription, and which are induced by reactive agents, such as UV light or formaldehyde. Associates with the DNA replication machinery and specifically removes DPCs during DNA synthesis. Catalyzes proteolytic cleavage of the hmces DNA-protein cross-link following unfolding by the brip1/fancj helicase. Acts as a pleiotropic protease for DNA-binding proteins cross-linked with DNA, such as top1, top2a, histones H3 and H4. Mediates degradation of DPCs that are not ubiquitinated, while it is not able to degrade ubiquitinated DPCs. SPRTN activation requires polymerase collision with DPCs followed by helicase bypass of DPCs. May also act as a 'reader' of ubiquitinated pcna: facilitates chromatin association of rad18 and is required for efficient pcna monoubiquitination, promoting a feed-forward loop to enhance pcna ubiquitination and translesion DNA synthesis. Acts as a regulator of translesion DNA synthesis by recruiting vcp/p97 to sites of DNA damage. This is DNA-dependent metalloprotease SPRTN from Xenopus tropicalis (Western clawed frog).